A 103-amino-acid polypeptide reads, in one-letter code: Small ribosomal subunit protein uS10 (103 aa).

Belongs to the universal ribosomal protein uS10 family. In terms of assembly, part of the 30S ribosomal subunit.

Involved in the binding of tRNA to the ribosomes. The protein is Small ribosomal subunit protein uS10 of Syntrophobacter fumaroxidans (strain DSM 10017 / MPOB).